Here is a 677-residue protein sequence, read N- to C-terminus: Fermitin family homolog 1 (677 aa).

Positions 96–653 (MLRLRLPNLK…HEYIGGYIFL (558 aa)) constitute an FERM domain. Ser-170, Ser-179, and Ser-361 each carry phosphoserine. The region spanning 377–473 (KLFRPKKLLP…WMAACMLASK (97 aa)) is the PH domain.

It belongs to the kindlin family. As to quaternary structure, interacts with the cytoplasmic domain of integrins ITGB1 and ITGB3. In terms of tissue distribution, expressed in brain, skeletal muscle, kidney, colon, adrenal gland, prostate, and placenta. Weakly or not expressed in heart, thymus, spleen, liver, small intestine, bone marrow, lung and peripheral blood leukocytes. Overexpressed in some colon and lung tumors. In skin, it is localized within the epidermis and particularly in basal keratocytes. Not detected in epidermal melanocytes and dermal fibroblasts.

Its subcellular location is the cytoplasm. The protein localises to the cytoskeleton. It is found in the cell junction. The protein resides in the focal adhesion. It localises to the cell projection. Its subcellular location is the ruffle membrane. Functionally, involved in cell adhesion. Contributes to integrin activation. When coexpressed with talin, potentiates activation of ITGA2B. Required for normal keratinocyte proliferation. Required for normal polarization of basal keratinocytes in skin, and for normal cell shape. Required for normal adhesion of keratinocytes to fibronectin and laminin, and for normal keratinocyte migration to wound sites. May mediate TGF-beta 1 signaling in tumor progression. The sequence is that of Fermitin family homolog 1 (FERMT1) from Homo sapiens (Human).